The following is a 575-amino-acid chain: Proline--tRNA ligase (575 aa).

Belongs to the class-II aminoacyl-tRNA synthetase family. ProS type 1 subfamily. Homodimer.

The protein resides in the cytoplasm. It catalyses the reaction tRNA(Pro) + L-proline + ATP = L-prolyl-tRNA(Pro) + AMP + diphosphate. Its function is as follows. Catalyzes the attachment of proline to tRNA(Pro) in a two-step reaction: proline is first activated by ATP to form Pro-AMP and then transferred to the acceptor end of tRNA(Pro). As ProRS can inadvertently accommodate and process non-cognate amino acids such as alanine and cysteine, to avoid such errors it has two additional distinct editing activities against alanine. One activity is designated as 'pretransfer' editing and involves the tRNA(Pro)-independent hydrolysis of activated Ala-AMP. The other activity is designated 'posttransfer' editing and involves deacylation of mischarged Ala-tRNA(Pro). The misacylated Cys-tRNA(Pro) is not edited by ProRS. This chain is Proline--tRNA ligase, found in Saccharophagus degradans (strain 2-40 / ATCC 43961 / DSM 17024).